Consider the following 176-residue polypeptide: ATP synthase subunit delta (176 aa).

Belongs to the ATPase delta chain family. As to quaternary structure, F-type ATPases have 2 components, F(1) - the catalytic core - and F(0) - the membrane proton channel. F(1) has five subunits: alpha(3), beta(3), gamma(1), delta(1), epsilon(1). F(0) has three main subunits: a(1), b(2) and c(10-14). The alpha and beta chains form an alternating ring which encloses part of the gamma chain. F(1) is attached to F(0) by a central stalk formed by the gamma and epsilon chains, while a peripheral stalk is formed by the delta and b chains.

The protein resides in the cell inner membrane. F(1)F(0) ATP synthase produces ATP from ADP in the presence of a proton or sodium gradient. F-type ATPases consist of two structural domains, F(1) containing the extramembraneous catalytic core and F(0) containing the membrane proton channel, linked together by a central stalk and a peripheral stalk. During catalysis, ATP synthesis in the catalytic domain of F(1) is coupled via a rotary mechanism of the central stalk subunits to proton translocation. Functionally, this protein is part of the stalk that links CF(0) to CF(1). It either transmits conformational changes from CF(0) to CF(1) or is implicated in proton conduction. This chain is ATP synthase subunit delta, found in Polaromonas sp. (strain JS666 / ATCC BAA-500).